Here is a 333-residue protein sequence, read N- to C-terminus: Porphobilinogen deaminase (333 aa).

Residue C255 is modified to S-(dipyrrolylmethanemethyl)cysteine.

It belongs to the HMBS family. As to quaternary structure, monomer. Requires dipyrromethane as cofactor.

The enzyme catalyses 4 porphobilinogen + H2O = hydroxymethylbilane + 4 NH4(+). The protein operates within porphyrin-containing compound metabolism; protoporphyrin-IX biosynthesis; coproporphyrinogen-III from 5-aminolevulinate: step 2/4. In terms of biological role, tetrapolymerization of the monopyrrole PBG into the hydroxymethylbilane pre-uroporphyrinogen in several discrete steps. The protein is Porphobilinogen deaminase of Burkholderia vietnamiensis (strain G4 / LMG 22486) (Burkholderia cepacia (strain R1808)).